The following is a 136-amino-acid chain: D-ribose pyranase (136 aa).

H20 functions as the Proton donor in the catalytic mechanism. Substrate is bound by residues D28, H98, and 120 to 122 (YAN).

This sequence belongs to the RbsD / FucU family. RbsD subfamily. As to quaternary structure, homodecamer.

It localises to the cytoplasm. The catalysed reaction is beta-D-ribopyranose = beta-D-ribofuranose. Its pathway is carbohydrate metabolism; D-ribose degradation; D-ribose 5-phosphate from beta-D-ribopyranose: step 1/2. Functionally, catalyzes the interconversion of beta-pyran and beta-furan forms of D-ribose. The sequence is that of D-ribose pyranase from Geobacillus kaustophilus (strain HTA426).